We begin with the raw amino-acid sequence, 544 residues long: Matrilin-1 (544 aa).

Residues methionine 1–glycine 26 form the signal peptide. The VWFA 1 domain maps to aspartate 42–phenylalanine 217. Asparagine 77 is a glycosylation site (N-linked (GlcNAc...) asparagine). One can recognise an EGF-like domain in the interval valine 224–asparagine 264. Intrachain disulfides connect cysteine 228/cysteine 239, cysteine 235/cysteine 248, and cysteine 250/cysteine 263. Residues aspartate 276 to leucine 448 enclose the VWFA 2 domain. Asparagine 345 is a glycosylation site (N-linked (GlcNAc...) asparagine).

Homotrimer. Part of a complex composed of MATN1 (via VWFA1 domain), type 2 collagens and type 6 collagens. Forms a complex (via covalent bonds) with ACAN; the interaction increases in abundance with increasing age of the organism via an increase in occupancy of MATN1 binding sites. Interacts with COMP. In terms of processing, N-glycosylated; reduces binding affinity for type 2 collagens. As to expression, expressed in trachea from fetus into adulthood (at protein level).

It is found in the secreted. It localises to the extracellular space. The protein resides in the extracellular matrix. A major component of the extracellular matrix of non-articular cartilage. Binds to type 2 collagens and forms long concatenated protein networks as part of the extracellular matrix. Required for the network-like organization and bundling of collagen fibrils surrounding chondrocytes in the zones of maturation and hypertrophy. Required for mechanotransduction and adaption to mechanical loading in cartilage chondrocytes, resulting in an increase in expression of the extracellular matrix components ACAN and COL2A1. Acts as a moderator of angiogenesis in response to injury. The polypeptide is Matrilin-1 (Bos taurus (Bovine)).